Here is a 440-residue protein sequence, read N- to C-terminus: MAKMPLSVVVFLLFSAAFLAVSMAEIKSLVISDDARPMILFEKFGFTHTGHVTVSISSVSVVSTSSDPNPEASRLGFFLLSEESLLQVLLEIQQNPRFCVLDSHYVTHLFTFRDLSPPPNSRFNQSYPVTSPNEYSLFFANCVPETKVSMAVRTEMYNKDPNGSKDYLPAGSTQLPTLYSFFFLCYVAFLGFWSYTCWTNKQTVHRIHLLMAGLLLIKSLNLICAAEDKHYVKITGTPHGWDILFYIFQFIRVVLLFTVIILIGTGWSFLKPFLQEKEKNVLIIVIPLQVLANIASIVIGETGPFIKDWVTWNQVFLLVDIICCCAIIFPIVWSIRSLRETSKTDGKAARNLSKLTLFRQFYIVVIGYLYFTRIVVFALKTIAAYKYQWVSFAAEEIVSLVFYVIMFHMFRPEEKNEYFAVDDDEEEAAALALRDEEFEL.

The N-terminal stretch at 1 to 24 is a signal peptide; that stretch reads MAKMPLSVVVFLLFSAAFLAVSMA. Residues Asn-124 and Asn-162 are each glycosylated (N-linked (GlcNAc...) asparagine). Transmembrane regions (helical) follow at residues 175 to 195, 207 to 227, 243 to 263, 281 to 301, and 315 to 335; these read LPTL…FWSY, IHLL…CAAE, ILFY…IILI, VLII…VIGE, and VFLL…VWSI. The N-linked (GlcNAc...) asparagine glycan is linked to Asn-351. The next 2 helical transmembrane spans lie at 363 to 383 and 390 to 410; these read IVVI…KTIA and VSFA…FHMF.

This sequence belongs to the LU7TM family.

The protein resides in the membrane. Its function is as follows. Plays a role in plants and microbes interactions. G-protein coupled receptor involved in root growth mediated by the bacterial quorum-sensing signals N-acyl-homoserine lactones (AHLs). This chain is Protein CANDIDATE G-PROTEIN COUPLED RECEPTOR 7, found in Arabidopsis thaliana (Mouse-ear cress).